The following is a 311-amino-acid chain: Pantothenate synthetase (311 aa).

43–50 contributes to the ATP binding site; the sequence is MGALHEGH. The active-site Proton donor is the H50. Residue Q75 coordinates (R)-pantoate. Beta-alanine is bound at residue Q75. 161-164 is a binding site for ATP; it reads GEKD. Q167 provides a ligand contact to (R)-pantoate. ATP contacts are provided by residues V190 and 198-201; that span reads MSSR.

Belongs to the pantothenate synthetase family. Homodimer.

It is found in the cytoplasm. The enzyme catalyses (R)-pantoate + beta-alanine + ATP = (R)-pantothenate + AMP + diphosphate + H(+). It functions in the pathway cofactor biosynthesis; (R)-pantothenate biosynthesis; (R)-pantothenate from (R)-pantoate and beta-alanine: step 1/1. Catalyzes the condensation of pantoate with beta-alanine in an ATP-dependent reaction via a pantoyl-adenylate intermediate. The polypeptide is Pantothenate synthetase (Mycolicibacterium vanbaalenii (strain DSM 7251 / JCM 13017 / BCRC 16820 / KCTC 9966 / NRRL B-24157 / PYR-1) (Mycobacterium vanbaalenii)).